The primary structure comprises 580 residues: tRNA-guanine(15) transglycosylase (580 aa).

The active-site Nucleophile is the Asp-91. Substrate-binding residues include Asp-126 and Ala-192. Cys-275, Cys-277, and Cys-280 together coordinate Zn(2+). The PUA domain maps to 504 to 579 (RMRVVVDEDA…LAVKVRRGVE (76 aa)).

This sequence belongs to the archaeosine tRNA-ribosyltransferase family. The cofactor is Zn(2+).

The catalysed reaction is guanosine(15) in tRNA + 7-cyano-7-deazaguanine = 7-cyano-7-carbaguanosine(15) in tRNA + guanine. It functions in the pathway tRNA modification; archaeosine-tRNA biosynthesis. In terms of biological role, exchanges the guanine residue with 7-cyano-7-deazaguanine (preQ0) at position 15 in the dihydrouridine loop (D-loop) of archaeal tRNAs. This Thermococcus onnurineus (strain NA1) protein is tRNA-guanine(15) transglycosylase.